The sequence spans 464 residues: tRNA modification GTPase MnmE (464 aa).

Positions 25, 87, and 130 each coordinate (6S)-5-formyl-5,6,7,8-tetrahydrofolate. Residues 226-386 enclose the TrmE-type G domain; that stretch reads GLSVVLAGQP…LRAELLRIAG (161 aa). Asparagine 236 is a binding site for K(+). GTP contacts are provided by residues 236–241, 255–261, and 280–283; these read NVGKSS, TPIAGTT, and DTAG. A Mg(2+)-binding site is contributed by serine 240. K(+)-binding residues include threonine 255, isoleucine 257, and threonine 260. Threonine 261 contributes to the Mg(2+) binding site. Lysine 464 is a (6S)-5-formyl-5,6,7,8-tetrahydrofolate binding site.

It belongs to the TRAFAC class TrmE-Era-EngA-EngB-Septin-like GTPase superfamily. TrmE GTPase family. As to quaternary structure, homodimer. Heterotetramer of two MnmE and two MnmG subunits. Requires K(+) as cofactor.

The protein localises to the cytoplasm. In terms of biological role, exhibits a very high intrinsic GTPase hydrolysis rate. Involved in the addition of a carboxymethylaminomethyl (cmnm) group at the wobble position (U34) of certain tRNAs, forming tRNA-cmnm(5)s(2)U34. This is tRNA modification GTPase MnmE from Burkholderia orbicola (strain MC0-3).